The primary structure comprises 203 residues: Nascent polypeptide-associated complex subunit alpha (203 aa).

Basic and acidic residues predominate over residues 1 to 19 (MADPRIEELPDEEVPKTNV). Residues 1-45 (MADPRIEELPDEEVPKTNVEDAADSSESEAGEEPTIPGGAAVTIH) are disordered. Residues 21–32 (DAADSSESEAGE) show a composition bias toward acidic residues. The NAC-A/B domain maps to 46–111 (SRNEKKARKA…AKIEDLNSQA (66 aa)). Residues 118-167 (QLAAAEAAGEHAGHDHDHDKGKGKAPETEAKKEEEEDDGEEVDETGLEPK) form a disordered region. A compositionally biased stretch (basic and acidic residues) spans 125-150 (AGEHAGHDHDHDKGKGKAPETEAKKE). A compositionally biased stretch (acidic residues) spans 151 to 163 (EEEDDGEEVDETG). Residues 164 to 203 (LEPKDIDLVMAQANVSRKKAVKALRENDNDIVNSIMALSI) enclose the UBA domain.

It belongs to the NAC-alpha family. In terms of assembly, part of the nascent polypeptide-associated complex (NAC), consisting of egd2 and egd1. NAC associates with ribosomes via egd1.

Its subcellular location is the cytoplasm. The protein resides in the nucleus. Its function is as follows. Component of the nascent polypeptide-associated complex (NAC), a dynamic component of the ribosomal exit tunnel, protecting the emerging polypeptides from interaction with other cytoplasmic proteins to ensure appropriate nascent protein targeting. The NAC complex also promotes mitochondrial protein import by enhancing productive ribosome interactions with the outer mitochondrial membrane and blocks the inappropriate interaction of ribosomes translating non-secretory nascent polypeptides with translocation sites in the membrane of the endoplasmic reticulum. Egd2 may also be involved in transcription regulation. The polypeptide is Nascent polypeptide-associated complex subunit alpha (egd2) (Emericella nidulans (strain FGSC A4 / ATCC 38163 / CBS 112.46 / NRRL 194 / M139) (Aspergillus nidulans)).